A 323-amino-acid chain; its full sequence is Elongation factor P--(R)-beta-lysine ligase (323 aa).

Residue 76 to 78 coordinates substrate; sequence SPE. Residues 100 to 102 and Asn-109 contribute to the ATP site; that span reads RNE. Substrate is bound at residue Tyr-118. 242-243 serves as a coordination point for ATP; the sequence is EL. Residue Glu-249 coordinates substrate. Gly-298 contacts ATP.

This sequence belongs to the class-II aminoacyl-tRNA synthetase family. EpmA subfamily. In terms of assembly, homodimer.

The enzyme catalyses D-beta-lysine + L-lysyl-[protein] + ATP = N(6)-((3R)-3,6-diaminohexanoyl)-L-lysyl-[protein] + AMP + diphosphate + H(+). Functionally, with EpmB is involved in the beta-lysylation step of the post-translational modification of translation elongation factor P (EF-P). Catalyzes the ATP-dependent activation of (R)-beta-lysine produced by EpmB, forming a lysyl-adenylate, from which the beta-lysyl moiety is then transferred to the epsilon-amino group of a conserved specific lysine residue in EF-P. The chain is Elongation factor P--(R)-beta-lysine ligase from Mannheimia succiniciproducens (strain KCTC 0769BP / MBEL55E).